Here is a 189-residue protein sequence, read N- to C-terminus: Imidazoleglycerol-phosphate dehydratase (189 aa).

This sequence belongs to the imidazoleglycerol-phosphate dehydratase family.

It is found in the cytoplasm. It carries out the reaction D-erythro-1-(imidazol-4-yl)glycerol 3-phosphate = 3-(imidazol-4-yl)-2-oxopropyl phosphate + H2O. It participates in amino-acid biosynthesis; L-histidine biosynthesis; L-histidine from 5-phospho-alpha-D-ribose 1-diphosphate: step 6/9. This chain is Imidazoleglycerol-phosphate dehydratase, found in Nautilia profundicola (strain ATCC BAA-1463 / DSM 18972 / AmH).